A 475-amino-acid polypeptide reads, in one-letter code: LEC14B homolog (475 aa).

The tract at residues 1–34 is disordered; it reads MSYRTRFGKDNSACDSGNAVEGSGSSKGPNEVSN. The segment covering 23–33 has biased composition (polar residues); that stretch reads SGSSKGPNEVS. WD repeat units follow at residues 211 to 240, 252 to 283, 299 to 329, 375 to 411, and 423 to 453; these read DEFGIFSVRFSTDGRELVAASRDASIYVYD, AHSSDVNTVCFADETGHLIYSGSDDNLCKVWD, GHLEGVTFIDSRGDGRYFISNGKDQTTQLWD, GHGVLRTLIRCYLSPAYSTGQKYIYTGSSDHCVYIYD, and HHEGPVRDCSWHPLYPMLVSSSWDGTIARWE.

It belongs to the WD repeat LEC14B family.

This chain is LEC14B homolog, found in Prunus armeniaca (Apricot).